Consider the following 47-residue polypeptide: NADH dehydrogenase [ubiquinone] iron-sulfur protein 2 (47 aa).

The protein belongs to the complex I 49 kDa subunit family. As to quaternary structure, complex I is composed of about 45 different subunits. This is a component of the iron-sulfur (IP) fragment of the enzyme.

The protein resides in the mitochondrion inner membrane. It carries out the reaction a ubiquinone + NADH + 5 H(+)(in) = a ubiquinol + NAD(+) + 4 H(+)(out). In terms of biological role, core subunit of the mitochondrial membrane respiratory chain NADH dehydrogenase (Complex I) that is believed to belong to the minimal assembly required for catalysis. Complex I functions in the transfer of electrons from NADH to the respiratory chain. The immediate electron acceptor for the enzyme is believed to be ubiquinone. Component of the iron-sulfur (IP) fragment of the enzyme. The polypeptide is NADH dehydrogenase [ubiquinone] iron-sulfur protein 2 (NAD7) (Solanum tuberosum (Potato)).